The chain runs to 351 residues: UDP-N-acetylglucosamine--N-acetylmuramyl-(pentapeptide) pyrophosphoryl-undecaprenol N-acetylglucosamine transferase (351 aa).

UDP-N-acetyl-alpha-D-glucosamine is bound by residues 13–15 (TGG), Asn-125, Arg-161, Ser-189, Ile-241, 260–265 (ALTVCE), and Gln-285.

The protein belongs to the glycosyltransferase 28 family. MurG subfamily.

The protein localises to the cell inner membrane. The enzyme catalyses di-trans,octa-cis-undecaprenyl diphospho-N-acetyl-alpha-D-muramoyl-L-alanyl-D-glutamyl-meso-2,6-diaminopimeloyl-D-alanyl-D-alanine + UDP-N-acetyl-alpha-D-glucosamine = di-trans,octa-cis-undecaprenyl diphospho-[N-acetyl-alpha-D-glucosaminyl-(1-&gt;4)]-N-acetyl-alpha-D-muramoyl-L-alanyl-D-glutamyl-meso-2,6-diaminopimeloyl-D-alanyl-D-alanine + UDP + H(+). The protein operates within cell wall biogenesis; peptidoglycan biosynthesis. Cell wall formation. Catalyzes the transfer of a GlcNAc subunit on undecaprenyl-pyrophosphoryl-MurNAc-pentapeptide (lipid intermediate I) to form undecaprenyl-pyrophosphoryl-MurNAc-(pentapeptide)GlcNAc (lipid intermediate II). This chain is UDP-N-acetylglucosamine--N-acetylmuramyl-(pentapeptide) pyrophosphoryl-undecaprenol N-acetylglucosamine transferase, found in Haemophilus influenzae (strain PittEE).